A 625-amino-acid chain; its full sequence is DNA-directed RNA polymerase subunit gamma (625 aa).

Residues Cys71, Cys73, Cys86, and Cys89 each contribute to the Zn(2+) site. Mg(2+) is bound by residues Asp467, Asp469, and Asp471.

The protein belongs to the RNA polymerase beta' chain family. RpoC1 subfamily. In terms of assembly, in cyanobacteria the RNAP catalytic core is composed of 2 alpha, 1 beta, 1 beta', 1 gamma and 1 omega subunit. When a sigma factor is associated with the core the holoenzyme is formed, which can initiate transcription. It depends on Mg(2+) as a cofactor. Zn(2+) serves as cofactor.

The catalysed reaction is RNA(n) + a ribonucleoside 5'-triphosphate = RNA(n+1) + diphosphate. Functionally, DNA-dependent RNA polymerase catalyzes the transcription of DNA into RNA using the four ribonucleoside triphosphates as substrates. This is DNA-directed RNA polymerase subunit gamma from Rippkaea orientalis (strain PCC 8801 / RF-1) (Cyanothece sp. (strain PCC 8801)).